A 61-amino-acid polypeptide reads, in one-letter code: MDPNCSCTAGESCTCAGSCKCKDCKCASCKKSCCSCCPVGCAKCAQGCVCKGASDKCSCCA.

An N-acetylmethionine modification is found at methionine 1. The interval 1 to 29 (MDPNCSCTAGESCTCAGSCKCKDCKCASC) is beta. 18 residues coordinate a divalent metal cation: cysteine 5, cysteine 7, cysteine 13, cysteine 15, cysteine 19, cysteine 21, cysteine 24, cysteine 26, cysteine 29, cysteine 33, cysteine 34, cysteine 36, cysteine 37, cysteine 41, cysteine 44, cysteine 48, cysteine 50, and cysteine 57. An alpha region spans residues 30–61 (KKSCCSCCPVGCAKCAQGCVCKGASDKCSCCA). Residue serine 58 is modified to Phosphoserine. 2 residues coordinate a divalent metal cation: cysteine 59 and cysteine 60.

It belongs to the metallothionein superfamily. Type 1 family. As to quaternary structure, interacts with EOLA1.

In terms of biological role, metallothioneins have a high content of cysteine residues that bind various heavy metals; these proteins are transcriptionally regulated by both heavy metals and glucocorticoids. In Ovis aries (Sheep), this protein is Metallothionein-2 (MT2A).